We begin with the raw amino-acid sequence, 574 residues long: Penicillin-binding protein activator LpoA (574 aa).

A signal peptide spans 1–25; the sequence is MTILLQRAKFKKRLMPILFPLMLAG. A lipid anchor (N-palmitoyl cysteine) is attached at C26. A lipid anchor (S-diacylglycerol cysteine) is attached at C26.

Belongs to the LpoA family. In terms of assembly, interacts with PBP1a.

The protein localises to the cell outer membrane. Its function is as follows. Regulator of peptidoglycan synthesis that is essential for the function of penicillin-binding protein 1A (PBP1a). In Mannheimia succiniciproducens (strain KCTC 0769BP / MBEL55E), this protein is Penicillin-binding protein activator LpoA.